The primary structure comprises 138 residues: Thyrotropin subunit beta (138 aa).

The N-terminal stretch at 1 to 20 is a signal peptide; that stretch reads MTATFLMSMIFGLACGQAMS. Cystine bridges form between cysteine 22-cysteine 72, cysteine 36-cysteine 87, cysteine 39-cysteine 125, cysteine 47-cysteine 103, cysteine 51-cysteine 105, and cysteine 108-cysteine 115. N-linked (GlcNAc...) asparagine glycosylation occurs at asparagine 43. The propeptide occupies 133–138; that stretch reads MVGFSI.

The protein belongs to the glycoprotein hormones subunit beta family. As to quaternary structure, heterodimer of a common alpha chain and a unique beta chain which confers biological specificity to thyrotropin, lutropin, follitropin and gonadotropin.

Its subcellular location is the secreted. Its function is as follows. Indispensable for the control of thyroid structure and metabolism. The polypeptide is Thyrotropin subunit beta (TSHB) (Bos taurus (Bovine)).